The chain runs to 266 residues: Chymotrypsin-like elastase family member 1 (266 aa).

Positions 1 to 16 (MLRFLVFASLVLCGHS) are cleaved as a signal peptide. The propeptide at 17–26 (TEDVPETDAR) is activation peptide. One can recognise a Peptidase S1 domain in the interval 27–264 (VVGGAEARRN…YISWMNNVIA (238 aa)). An intrachain disulfide couples cysteine 56 to cysteine 72. The active-site Charge relay system is histidine 71. Glutamate 85, asparagine 87, glutamine 90, and glutamate 95 together coordinate Ca(2+). Asparagine 87 carries an N-linked (GlcNAc...) asparagine glycan. The active-site Charge relay system is aspartate 119. Cystine bridges form between cysteine 153-cysteine 220, cysteine 184-cysteine 200, and cysteine 210-cysteine 240. Serine 214 serves as the catalytic Charge relay system.

This sequence belongs to the peptidase S1 family. Elastase subfamily. Requires Ca(2+) as cofactor.

Its subcellular location is the secreted. The enzyme catalyses Hydrolysis of proteins, including elastin. Preferential cleavage: Ala-|-Xaa.. Its function is as follows. Serine proteases that hydrolyze many proteins in addition to elastin. The protein is Chymotrypsin-like elastase family member 1 (Cela1) of Mus musculus (Mouse).